A 406-amino-acid chain; its full sequence is MMQQQRLKQQQQQALMQQSLYHPGLLAPPQIEPILSGNLPPGFDSSTCRSVYVGNIHPQVTEPLLQEVFASTGPLEGCKLIRKDKSSYGFVDYFDRRSAALAIVTLNGRHLFGQPIKVNWAYASAQREDTSNHYNIFVGDLSPEVTDATLFACFSVYTSCSDARVMWDQKTGRSRGFGFVSFRNQQEAQSAINDLNGKWLGSRQIRCNWAAKGAGAVGEQNSDAKSVVELTSGTSDDGQEKVVNEDAPENNPQYTTVYVGNLAPEVTSVDLHRHFHALGAGVIEDVRIQRDKGFGFVRYSSHAEAARAIQLGNARLLFGKPVKCSWGSKPTPPGSSSNPLPPPAIGQIPGLSAMDLAAYQRQLALAKMAGAQAFMQPQGQRIGAPGQGIYDGGYGGIASTQPPMYF.

RRM domains are found at residues 49-123 (RSVY…WAYA) and 134-212 (YNIF…WAAK). The interval 231 to 250 (TSGTSDDGQEKVVNEDAPEN) is disordered. Positions 255 to 329 (TTVYVGNLAP…KPVKCSWGSK (75 aa)) constitute an RRM 3 domain.

The protein resides in the nucleus. Functionally, heterogeneous nuclear ribonucleoprotein (hnRNP)-like protein that acts as a component of the pre-mRNA processing machinery. Functions to facilitate the nuclear maturation of plant pre-mRNAs. Binds with high affinity to RNA molecules that contain AU-rich regions. May bind to the 3'-UTR and protects the mRNA against exonucleolytic degradation. Associates with nuclear poly(A)+ RNA in nucleus in vivo. Does not stimulate transcription or the 3' end cleavage/polyadenylation reaction. The chain is Oligouridylate-binding protein 1 (UBP1) from Nicotiana plumbaginifolia (Leadwort-leaved tobacco).